Reading from the N-terminus, the 1372-residue chain is DNA-directed RNA polymerase subunit beta' (1372 aa).

4 residues coordinate Zn(2+): cysteine 69, cysteine 71, cysteine 84, and cysteine 87. Mg(2+)-binding residues include aspartate 460, aspartate 462, and aspartate 464. Zn(2+)-binding residues include cysteine 808, cysteine 882, cysteine 889, and cysteine 892.

It belongs to the RNA polymerase beta' chain family. The RNAP catalytic core consists of 2 alpha, 1 beta, 1 beta' and 1 omega subunit. When a sigma factor is associated with the core the holoenzyme is formed, which can initiate transcription. Requires Mg(2+) as cofactor. It depends on Zn(2+) as a cofactor.

It carries out the reaction RNA(n) + a ribonucleoside 5'-triphosphate = RNA(n+1) + diphosphate. DNA-dependent RNA polymerase catalyzes the transcription of DNA into RNA using the four ribonucleoside triphosphates as substrates. This Rickettsia prowazekii (strain Madrid E) protein is DNA-directed RNA polymerase subunit beta'.